The sequence spans 175 residues: Protein MAL2 (175 aa).

Residues 1–33 (MSAGGAVPPPPNPAVSFPAPRVTLPAGPDILRT) are Cytoplasmic-facing. Residues 30-174 (ILRTYSGAFV…SLGLALRRWR (145 aa)) enclose the MARVEL domain. A helical membrane pass occupies residues 34–54 (YSGAFVCLEIVLGGLVWILVA). Residues 55 to 65 (SSNVPLPLLQG) are Lumenal-facing. Residues 66 to 86 (WVMFVSVTAFFFSLLFLGLFL) form a helical membrane-spanning segment. Topologically, residues 87–101 (SGMVTQIDANWNFLD) are cytoplasmic. A helical membrane pass occupies residues 102–122 (FVYHFIVFVFYFGAFLLEAAA). Over 123–148 (TSLHDLQCNTTMTVKPLLNDNQYNIN) the chain is Lumenal. N131 carries N-linked (GlcNAc...) asparagine glycosylation. The helical transmembrane segment at 149 to 169 (VAATVFAFMTTACYGCSLGLA) threads the bilayer. Residues 170 to 175 (LRRWRP) lie on the Cytoplasmic side of the membrane.

The protein belongs to the MAL family. Interacts with TPD52L2.

It localises to the cell membrane. It is found in the apical cell membrane. Its function is as follows. Member of the machinery of polarized transport. Required for the indirect transcytotic route at the step of the egress of the transcytosing cargo from perinuclear endosomes in order for it to travel to the apical surface via a raft-dependent pathway. In Mus musculus (Mouse), this protein is Protein MAL2 (Mal2).